A 90-amino-acid chain; its full sequence is Large ribosomal subunit protein bL27 (90 aa).

Positions Met1–Gly22 are disordered.

This sequence belongs to the bacterial ribosomal protein bL27 family.

The sequence is that of Large ribosomal subunit protein bL27 from Coxiella burnetii (strain Dugway 5J108-111).